The following is a 387-amino-acid chain: 3-ketoacyl-CoA thiolase (387 aa).

Catalysis depends on cysteine 91, which acts as the Acyl-thioester intermediate. Active-site proton acceptor residues include histidine 343 and cysteine 373.

This sequence belongs to the thiolase-like superfamily. Thiolase family. In terms of assembly, heterotetramer of two alpha chains (FadB) and two beta chains (FadA).

The protein localises to the cytoplasm. The enzyme catalyses an acyl-CoA + acetyl-CoA = a 3-oxoacyl-CoA + CoA. It functions in the pathway lipid metabolism; fatty acid beta-oxidation. Catalyzes the final step of fatty acid oxidation in which acetyl-CoA is released and the CoA ester of a fatty acid two carbons shorter is formed. Involved in the aerobic and anaerobic degradation of long-chain fatty acids. This chain is 3-ketoacyl-CoA thiolase, found in Escherichia coli O6:H1 (strain CFT073 / ATCC 700928 / UPEC).